Consider the following 210-residue polypeptide: Na(+)-translocating NADH-quinone reductase subunit D (210 aa).

Transmembrane regions (helical) follow at residues Phe42–Ile62, Ile72–Ala92, Val103–Met123, Leu131–Phe151, and Asn178–Ile198.

It belongs to the NqrDE/RnfAE family. Composed of six subunits; NqrA, NqrB, NqrC, NqrD, NqrE and NqrF.

The protein resides in the cell inner membrane. The catalysed reaction is a ubiquinone + n Na(+)(in) + NADH + H(+) = a ubiquinol + n Na(+)(out) + NAD(+). In terms of biological role, NQR complex catalyzes the reduction of ubiquinone-1 to ubiquinol by two successive reactions, coupled with the transport of Na(+) ions from the cytoplasm to the periplasm. NqrA to NqrE are probably involved in the second step, the conversion of ubisemiquinone to ubiquinol. This Vibrio vulnificus (strain CMCP6) protein is Na(+)-translocating NADH-quinone reductase subunit D.